The sequence spans 445 residues: Adenylosuccinate synthetase (445 aa).

Residues 24 to 30 and 52 to 54 each bind GTP; these read GDEGKGK and GHT. Residue Asp25 is the Proton acceptor of the active site. Mg(2+) is bound by residues Asp25 and Gly52. IMP contacts are provided by residues 25-28, 50-53, Thr147, Arg161, Asn238, Thr253, and Arg317; these read DEGK and NAGH. The active-site Proton donor is His53. Residue 313-319 participates in substrate binding; it reads TTTGRRR. Residues Arg319, 345 to 347, and 427 to 429 contribute to the GTP site; these read KLD and GVG.

Belongs to the adenylosuccinate synthetase family. As to quaternary structure, homodimer. It depends on Mg(2+) as a cofactor.

It is found in the cytoplasm. It catalyses the reaction IMP + L-aspartate + GTP = N(6)-(1,2-dicarboxyethyl)-AMP + GDP + phosphate + 2 H(+). The protein operates within purine metabolism; AMP biosynthesis via de novo pathway; AMP from IMP: step 1/2. Its function is as follows. Plays an important role in the de novo pathway and in the salvage pathway of purine nucleotide biosynthesis. Catalyzes the first committed step in the biosynthesis of AMP from IMP. In Malassezia globosa (strain ATCC MYA-4612 / CBS 7966) (Dandruff-associated fungus), this protein is Adenylosuccinate synthetase.